The primary structure comprises 212 residues: uncharacterized protein (212 aa).

The tract at residues Arg-47–Arg-129 is disordered.

This is an uncharacterized protein from Caenorhabditis elegans.